The sequence spans 343 residues: Tumor necrosis factor receptor superfamily member wgn (343 aa).

Disordered regions lie at residues 1–44 (MMPP…IGGS) and 74–96 (SSAA…SIAS). Residues 1 to 76 (MMPPRLPGGH…ATSASSSSSA (76 aa)) form the signal peptide. Positions 13-24 (AMRSRSSSSGHH) are enriched in low complexity. A compositionally biased stretch (basic residues) spans 29-39 (FHKRRRRRQQH). The Extracellular portion of the chain corresponds to 77–201 (ANTDIAPPDP…AAWVLDWQTG (125 aa)). Residues 99–137 (PCAPQHWWDSQRDRCTPCTRCQGEMIPLRPCQLHTDTIC) form a TNFR-Cys repeat. Cystine bridges form between cysteine 100-cysteine 113, cysteine 116-cysteine 129, and cysteine 119-cysteine 137. Residues 202-222 (VLYVAVLTCLVFFSVAACILI) traverse the membrane as a helical segment. Topologically, residues 223-343 (HHMRQWRRME…GVRGCSGLKG (121 aa)) are cytoplasmic. Residues 225 to 257 (MRQWRRMERRLDQDVEELSTKLMAKLAEVQSLD) adopt a coiled-coil conformation.

In terms of assembly, monomer. Interacts (via extracellular cystein-rich domain) with egr (via secreted TNF-homology soluble form); forms heterohexamers when 3 copies associate with egr trimers. Interacts with Traf6. Interacts with Moe. In terms of tissue distribution, expressed in the adult midgut; under normal conditions expressed at higher levels than the other TNF receptor grnd.

It localises to the cell membrane. It is found in the cytoplasmic vesicle membrane. In terms of biological role, receptor for egr. Involved in induction of apoptosis by triggering JNK signaling. Mediates the tumor suppressor activity of egr which eliminates oncogenic cells from epithelia, thereby maintaining epithelial integrity. Following UV-induced epidermal damage, binds to egr released from apoptotic epidermal cells and plays a role in development of thermal allodynia, a responsiveness to subthreshold thermal stimuli which are not normally perceived as noxious. Together with Moe, involved in control of axon targeting of R8 and R2-R5 photoreceptors, independent of egr. The protein is Tumor necrosis factor receptor superfamily member wgn of Drosophila melanogaster (Fruit fly).